The primary structure comprises 398 residues: Candidapepsin-2 (398 aa).

The N-terminal stretch at 1–18 (MFLKNIFIGLAIALLVDA) is a signal peptide. Residues 19–56 (TPTTTKRSAGFVALDFSVVKTPKAFPVTNGQEGKTSKR) constitute a propeptide, activation peptide. A Peptidase A1 domain is found at 70-384 (YAADITVGSN…DLDNNEISLA (315 aa)). D88 is an active-site residue. 88-90 (DTG) contributes to the pepstatin A binding site. The cysteines at positions 103 and 115 are disulfide-linked. Residues 141–142 (GD) and 274–278 (DSGTT) contribute to the pepstatin A site. The active site involves D274. Residues C312 and C350 are joined by a disulfide bond. N-linked (GlcNAc...) asparagine glycans are attached at residues N313 and N321.

The protein belongs to the peptidase A1 family. In terms of assembly, monomer. In terms of processing, O-glycosylated.

It is found in the secreted. The enzyme catalyses Preferential cleavage at the carboxyl of hydrophobic amino acids, but fails to cleave 15-Leu-|-Tyr-16, 16-Tyr-|-Leu-17 and 24-Phe-|-Phe-25 of insulin B chain. Activates trypsinogen, and degrades keratin.. The chain is Candidapepsin-2 (SAP2) from Candida albicans (strain WO-1) (Yeast).